A 317-amino-acid polypeptide reads, in one-letter code: Glycerol-3-phosphate dehydrogenase [NAD(P)+] (317 aa).

NADPH-binding residues include Trp20, Arg40, Arg41, and Lys88. Sn-glycerol 3-phosphate-binding residues include Lys88 and Gly116. Ser120 contributes to the NADPH binding site. Lys171, Asp224, Ser234, Arg235, and Asn236 together coordinate sn-glycerol 3-phosphate. Residue Lys171 is the Proton acceptor of the active site. Arg235 is an NADPH binding site. Glu261 provides a ligand contact to NADPH.

The protein belongs to the NAD-dependent glycerol-3-phosphate dehydrogenase family.

The protein resides in the cytoplasm. It carries out the reaction sn-glycerol 3-phosphate + NAD(+) = dihydroxyacetone phosphate + NADH + H(+). The catalysed reaction is sn-glycerol 3-phosphate + NADP(+) = dihydroxyacetone phosphate + NADPH + H(+). It participates in membrane lipid metabolism; glycerophospholipid metabolism. Catalyzes the reduction of the glycolytic intermediate dihydroxyacetone phosphate (DHAP) to sn-glycerol 3-phosphate (G3P), the key precursor for phospholipid synthesis. The chain is Glycerol-3-phosphate dehydrogenase [NAD(P)+] from Synechocystis sp. (strain ATCC 27184 / PCC 6803 / Kazusa).